The sequence spans 439 residues: Serine hydroxymethyltransferase (439 aa).

(6S)-5,6,7,8-tetrahydrofolate-binding positions include Leu-134 and 138-140 (GHL). An N6-(pyridoxal phosphate)lysine modification is found at Lys-243.

Belongs to the SHMT family. In terms of assembly, homodimer. Pyridoxal 5'-phosphate serves as cofactor.

It localises to the cytoplasm. The catalysed reaction is (6R)-5,10-methylene-5,6,7,8-tetrahydrofolate + glycine + H2O = (6S)-5,6,7,8-tetrahydrofolate + L-serine. The protein operates within one-carbon metabolism; tetrahydrofolate interconversion. It functions in the pathway amino-acid biosynthesis; glycine biosynthesis; glycine from L-serine: step 1/1. In terms of biological role, catalyzes the reversible interconversion of serine and glycine with tetrahydrofolate (THF) serving as the one-carbon carrier. This reaction serves as the major source of one-carbon groups required for the biosynthesis of purines, thymidylate, methionine, and other important biomolecules. Also exhibits THF-independent aldolase activity toward beta-hydroxyamino acids, producing glycine and aldehydes, via a retro-aldol mechanism. The sequence is that of Serine hydroxymethyltransferase from Brucella anthropi (strain ATCC 49188 / DSM 6882 / CCUG 24695 / JCM 21032 / LMG 3331 / NBRC 15819 / NCTC 12168 / Alc 37) (Ochrobactrum anthropi).